The primary structure comprises 814 residues: Spore development regulator umv1 (814 aa).

Disordered regions lie at residues Met-1–Glu-36, His-96–Gly-134, Gln-267–Ser-333, Pro-407–Pro-441, Pro-457–Thr-501, and Gln-539–Tyr-814. The segment covering Arg-7–Ser-18 has biased composition (polar residues). The region spanning Arg-53–Arg-274 is the Velvet domain. A compositionally biased stretch (basic residues) spans Val-271–Lys-285. Over residues Pro-407 to Pro-423 the composition is skewed to basic and acidic residues. The Nuclear localization signal motif lies at Arg-438–Ser-445. The span at Ala-620 to Arg-631 shows a compositional bias: low complexity. Basic and acidic residues-rich tracts occupy residues Thr-723–Gln-741 and Gly-760–Phe-796. A compositionally biased stretch (polar residues) spans Thr-800–Tyr-814.

It belongs to the velvet family. VosA subfamily. Forms a heterodimeric complex with velB; the formation of the VEL2-VOS1 complex is light-dependent.

The protein localises to the nucleus. Its function is as follows. Component of the velB-VosA heterodimeric complex that plays a dual role in activating genes associated with spore maturation and repressing certain development-associated genes. The complex binds DNA through the DNA-binding domain of vosA that recognizes an 11-nucleotide consensus sequence 5'-CTGGCCGCGGC-3' consisting of two motifs in the promoters of key developmental regulatory genes. Required for gall induction and teliospore formation on seedlings. This is Spore development regulator umv1 from Mycosarcoma maydis (Corn smut fungus).